A 165-amino-acid chain; its full sequence is Ubiquitin-fold modifier-conjugating enzyme 1 (165 aa).

C116 (glycyl thioester intermediate) is an active-site residue.

The protein belongs to the ubiquitin-conjugating enzyme family. UFC1 subfamily.

E2-like enzyme which forms an intermediate with UFM1 via a thioester linkage. This chain is Ubiquitin-fold modifier-conjugating enzyme 1, found in Drosophila virilis (Fruit fly).